We begin with the raw amino-acid sequence, 171 residues long: MTAILITGYRSFEIGIFDHKDPRVSIIKQAIRKDLIGYLENGVDWFIFTGNLGFEQWALEVANELKEEYPLQIATIFLFETHGDRWNEKNQKVLSQFRAVDFVKYYFPNYEQPTQFSQYYQFLLEKTEGAYVFYDTENETNLKYFLKKAKDMPHYQLLLLTFDRLNDMSQS.

This sequence belongs to the UPF0398 family.

The sequence is that of UPF0398 protein MGAS9429_Spy1349 from Streptococcus pyogenes serotype M12 (strain MGAS9429).